Here is a 445-residue protein sequence, read N- to C-terminus: Histidinol dehydrogenase (445 aa).

Residues Tyr-144, Gln-205, and Asn-228 each coordinate NAD(+). Substrate is bound by residues Ser-251, Gln-273, and His-276. Residues Gln-273 and His-276 each contribute to the Zn(2+) site. Active-site proton acceptor residues include Glu-341 and His-342. Substrate-binding residues include His-342, Asp-375, Glu-429, and His-434. Asp-375 contributes to the Zn(2+) binding site. His-434 is a binding site for Zn(2+).

This sequence belongs to the histidinol dehydrogenase family. The cofactor is Zn(2+).

The enzyme catalyses L-histidinol + 2 NAD(+) + H2O = L-histidine + 2 NADH + 3 H(+). It participates in amino-acid biosynthesis; L-histidine biosynthesis; L-histidine from 5-phospho-alpha-D-ribose 1-diphosphate: step 9/9. Functionally, catalyzes the sequential NAD-dependent oxidations of L-histidinol to L-histidinaldehyde and then to L-histidine. In Cupriavidus pinatubonensis (strain JMP 134 / LMG 1197) (Cupriavidus necator (strain JMP 134)), this protein is Histidinol dehydrogenase.